Here is a 3418-residue protein sequence, read N- to C-terminus: Breast cancer type 2 susceptibility protein (3418 aa).

The tract at residues 1-40 is interaction with PALB2; the sequence is MPIGSKERPTFFEIFKTRCNKADLGPISLNWFEELSSEAP. A disordered region spans residues 37–68; the sequence is SEAPPYNSEPAEESEHKNNNYEPNLFKTPQRK. Serine 70 is subject to Phosphoserine. The interval 358-381 is disordered; it reads VEPNDTDPLDSNVANQKPFESGSD. Phosphoserine is present on residues serine 445, serine 492, and serine 755. An interaction with NPM1 region spans residues 639–1000; it reads LHSSVKRSCS…NKWAGLLGPI (362 aa). BRCA2 repeat units follow at residues 1002–1036, 1212–1246, 1421–1455, 1517–1551, 1664–1698, and 1837–1871; these read NHSF…DIEE, NEVG…DIEN, FETS…QKPE, KEPT…EKEQ, IENS…EGIF, and FEVG…DSFS. The interaction with RAD51 stretch occupies residues 1003-2082; sequence HSFGGSFRTA…LHKVKGVLEE (1080 aa). The interaction with POLH stretch occupies residues 1338 to 1781; it reads GSDSSKNDTV…IEPVLKNVED (444 aa). A required for stimulation of POLH DNA polymerization activity region spans residues 1410-1595; the sequence is TATKTEQNIK…TAAPKCKEMQ (186 aa). Serine 1970 is subject to Phosphoserine. The BRCA2 7 repeat unit spans residues 1971-2005; it reads SANTCGIFSTASGKSVQVSDASLQNARQVFSEIED. Threonine 2035 carries the phosphothreonine modification. Residues 2051 to 2085 form a BRCA2 8 repeat; it reads NSSAFSGFSTASGKQVSILESSLHKVKGVLEEFDL. Serine 2095 bears the Phosphoserine mark. The interval 2270-2337 is interaction with HSF2BP; it reads GKRRGEPLIL…EPITCVPFRT (68 aa). Residues 2350-2545 are interaction with FANCD2; sequence TAPGQEFLSK…SHKQLYTYGV (196 aa). Residues 2430-2450 are disordered; it reads ENRQKQNIDGHGSDDSKNKIN. The tract at residues 2481-2832 is interaction with SEM1; it reads ITSLQNARDI…QRAYPIQWME (352 aa). The Nuclear export signal; masked by interaction with SEM1 motif lies at 2682–2698; that stretch reads AAKTLVLCVSDIISLSA. Serine 3291 carries the phosphoserine; by CDK1 and CDK2 modification. Serine 3319 is modified (phosphoserine). Threonine 3387 is subject to Phosphothreonine; by CHEK1 and CHEK2. Residues 3393–3418 are disordered; that stretch reads EQESSQASTEECEKNKQDTITTKKYI.

In terms of assembly, monomer and dimer. Interacts with RAD51; regulates RAD51 recruitment and function at sites of DNA repair. Interacts with WDR16, USP11, DMC1, ROCK2 and NPM1. Interacts with SEM1; the interaction masks a nuclear export signal in BRCA2. Interacts with both nonubiquitinated and monoubiquitinated FANCD2; this complex also includes XRCC3 and phosphorylated FANCG. Part of a BRCA complex containing BRCA1, BRCA2 and PALB2. Component of the homologous recombination repair (HR) complex composed of ERCC5/XPG, BRCA2, PALB2, DSS1 and RAD51. Within the complex, interacts with ERCC5/XPG and PALB2. Interacts directly with PALB2 which may serve as a scaffold for a HR complex containing PALB2, BRCA2, RAD51C, RAD51 and XRCC3. Interacts with BRCA1 only in the presence of PALB2 which serves as the bridging protein. Interacts with POLH; the interaction is direct. Interacts with the TREX-2 complex subunits PCID2 and SEM1. Interacts with HSF2BP and BRME1; the interaction with HSF2BP is direct and allows the formation of a ternary complex. The complex BRME1:HSF2BP:BRCA2 interacts with SPATA22, MEIOB and RAD51. Post-translationally, phosphorylated by ATM upon irradiation-induced DNA damage. Phosphorylation by CHEK1 and CHEK2 regulates interaction with RAD51. Phosphorylation at Ser-3291 by CDK1 and CDK2 is low in S phase when recombination is active, but increases as cells progress towards mitosis; this phosphorylation prevents homologous recombination-dependent repair during S phase and G2 by inhibiting RAD51 binding. Ubiquitinated in the absence of DNA damage; this does not lead to proteasomal degradation. In contrast, ubiquitination in response to DNA damage leads to proteasomal degradation. As to expression, highest levels of expression in breast and thymus, with slightly lower levels in lung, ovary and spleen.

Its subcellular location is the nucleus. The protein localises to the cytoplasm. It localises to the cytoskeleton. The protein resides in the microtubule organizing center. It is found in the centrosome. Functionally, involved in double-strand break repair and/or homologous recombination. Binds RAD51 and potentiates recombinational DNA repair by promoting assembly of RAD51 onto single-stranded DNA (ssDNA). Acts by targeting RAD51 to ssDNA over double-stranded DNA, enabling RAD51 to displace replication protein-A (RPA) from ssDNA and stabilizing RAD51-ssDNA filaments by blocking ATP hydrolysis. Part of a PALB2-scaffolded HR complex containing RAD51C and which is thought to play a role in DNA repair by HR. May participate in S phase checkpoint activation. Binds selectively to ssDNA, and to ssDNA in tailed duplexes and replication fork structures. May play a role in the extension step after strand invasion at replication-dependent DNA double-strand breaks; together with PALB2 is involved in both POLH localization at collapsed replication forks and DNA polymerization activity. In concert with NPM1, regulates centrosome duplication. Interacts with the TREX-2 complex (transcription and export complex 2) subunits PCID2 and SEM1, and is required to prevent R-loop-associated DNA damage and thus transcription-associated genomic instability. Silencing of BRCA2 promotes R-loop accumulation at actively transcribed genes in replicating and non-replicating cells, suggesting that BRCA2 mediates the control of R-loop associated genomic instability, independently of its known role in homologous recombination. The chain is Breast cancer type 2 susceptibility protein from Homo sapiens (Human).